The primary structure comprises 201 residues: Potassium-transporting ATPase KdpC subunit (201 aa).

A helical membrane pass occupies residues 9–29; it reads ILVMLALTLITGLLYPLAMTV. Polar residues-rich tracts occupy residues 73 to 84 and 91 to 101; these read TTAADPNDSTKT and AANSSGSNLGP. The tract at residues 73-103 is disordered; that stretch reads TTAADPNDSTKTVPAPYNAANSSGSNLGPTS.

This sequence belongs to the KdpC family. In terms of assembly, the system is composed of three essential subunits: KdpA, KdpB and KdpC.

The protein resides in the cell inner membrane. Part of the high-affinity ATP-driven potassium transport (or Kdp) system, which catalyzes the hydrolysis of ATP coupled with the electrogenic transport of potassium into the cytoplasm. This subunit acts as a catalytic chaperone that increases the ATP-binding affinity of the ATP-hydrolyzing subunit KdpB by the formation of a transient KdpB/KdpC/ATP ternary complex. The protein is Potassium-transporting ATPase KdpC subunit of Bradyrhizobium sp. (strain BTAi1 / ATCC BAA-1182).